The primary structure comprises 75 residues: Large ribosomal subunit protein bL28 (75 aa).

The segment at 1–21 (MARVCQVTGKRPMSGNKRSHA) is disordered.

It belongs to the bacterial ribosomal protein bL28 family.

The polypeptide is Large ribosomal subunit protein bL28 (Blochmanniella pennsylvanica (strain BPEN)).